A 1237-amino-acid polypeptide reads, in one-letter code: Mediator of RNA polymerase II transcription subunit 5 (1237 aa).

2 disordered regions span residues 1109 to 1131 (DDEP…TSNA) and 1202 to 1226 (HGAQ…ADSG). Residues 1119–1131 (HAAANATSHTSNA) show a composition bias toward low complexity.

The protein belongs to the Mediator complex subunit 5 family. Component of the Mediator complex.

It is found in the nucleus. In terms of biological role, component of the Mediator complex, a coactivator involved in the regulated transcription of nearly all RNA polymerase II-dependent genes. Mediator functions as a bridge to convey information from gene-specific regulatory proteins to the basal RNA polymerase II transcription machinery. Mediator is recruited to promoters by direct interactions with regulatory proteins and serves as a scaffold for the assembly of a functional preinitiation complex with RNA polymerase II and the general transcription factors. This Mycosarcoma maydis (Corn smut fungus) protein is Mediator of RNA polymerase II transcription subunit 5 (NUT1).